The primary structure comprises 337 residues: Serpentine receptor class delta-18 (337 aa).

Helical transmembrane passes span 2–22 (IIFF…LNLL), 90–110 (VGLS…LLSF), 130–150 (LILV…TIFA), 187–207 (IYSI…IFIL), 236–256 (ALTI…FYFL), and 270–290 (SIYA…LYFV).

It belongs to the nematode receptor-like protein srd family.

It localises to the membrane. The polypeptide is Serpentine receptor class delta-18 (srd-18) (Caenorhabditis elegans).